Consider the following 85-residue polypeptide: Putative regulatory protein Dtur_1444 (85 aa).

Belongs to the RemA family.

This is Putative regulatory protein Dtur_1444 from Dictyoglomus turgidum (strain DSM 6724 / Z-1310).